The sequence spans 682 residues: MPSLRTRREEAEMELSVPGPSPWTPAAQARVRDAPAVTHPGSAACGTPCCSDTELEAICPHYQQPDCDTRTEDKEFLHKEDIHEDLESQAEISENYAGDVSQVPELGDLCDDVSERDWGVPEGRRLPQSLSQEGDFTPAAMGLLRGPLGEKDLDCNGFDSRFSLSPNLMACQEIPTEERPHPYDMGGQSFQHSVDLTGHEGVPTAESPLICNECGKTFQGNPDLIQRQIVHTGEASFMCDDCGKTFSQNSVLKNRHRSHMSEKAYQCSECGKAFRGHSDFSRHQSHHSSERPYMCNECGKAFSQNSSLKKHQKSHMSEKPYECNECGKAFRRSSNLIQHQRIHSGEKPYVCSECGKAFRRSSNLIKHHRTHTGEKPFECGECGKAFSQSAHLRKHQRVHTGEKPYECNDCGKPFSRVSNLIKHHRVHTGEKPYKCSDCGKAFSQSSSLIQHRRIHTGEKPHVCNVCGKAFSYSSVLRKHQIIHTGEKPYRCSVCGKAFSHSSALIQHQGVHTGDKPYACHECGKTFGRSSNLILHQRVHTGEKPYECTECGKTFSQSSTLIQHQRIHNGLKPHECNQCGKAFNRSSNLIHHQKVHTGEKPYTCVECGKGFSQSSHLIQHQIIHTGERPYKCSECGKAFSQRSVLIQHQRIHTGVKPYDCAACGKAFSQRSKLIKHQLIHTRE.

The segment covering 1–10 (MPSLRTRREE) has biased composition (basic and acidic residues). Residues 1 to 43 (MPSLRTRREEAEMELSVPGPSPWTPAAQARVRDAPAVTHPGSA) form a disordered region. The interval 62–210 (YQQPDCDTRT…GVPTAESPLI (149 aa)) is necessary for transcription activation. The segment at 209–231 (LICNECGKTFQGNPDLIQRQIVH) adopts a C2H2-type 1; degenerate zinc-finger fold. The C2H2-type 2; degenerate zinc finger occupies 237–259 (FMCDDCGKTFSQNSVLKNRHRSH). Residue Lys253 forms a Glycyl lysine isopeptide (Lys-Gly) (interchain with G-Cter in SUMO2) linkage. C2H2-type zinc fingers lie at residues 265–287 (YQCS…QSHH), 293–315 (YMCN…QKSH), 321–343 (YECN…QRIH), 349–371 (YVCS…HRTH), 377–399 (FECG…QRVH), 405–427 (YECN…HRVH), 433–455 (YKCS…RRIH), and 461–483 (HVCN…QIIH). Required for nuclear localization regions lie at residues 268–393 (SECG…AHLR) and 341–373 (RIHS…THTG). The segment at 473–503 (SSVLRKHQIIHTGEKPYRCSVCGKAFSHSSA) is required for nuclear localization. At Lys487 the chain carries N6-acetyllysine. 7 consecutive C2H2-type zinc fingers follow at residues 489 to 511 (YRCS…QGVH), 517 to 539 (YACH…QRVH), 545 to 567 (YECT…QRIH), 573 to 595 (HECN…QKVH), 601 to 623 (YTCV…QIIH), 629 to 651 (YKCS…QRIH), and 657 to 679 (YDCA…QLIH).

This sequence belongs to the krueppel C2H2-type zinc-finger protein family. In terms of assembly, interacts with INCA1; the interaction inhibits INCA1 activity and induces the cell cycle process. As to expression, ubiquitous.

It localises to the nucleus. Functionally, acts as a transcriptional activator. Promotes cell proliferation by facilitating the cell cycle phase transition from the S to G2/M phase. Involved in both the hemin- and phorbol myristate acetate (PMA)-induced erythroid and megakaryocytic differentiation, respectively. Also plays a role as an inhibitor of cell apoptosis. The polypeptide is Zinc finger protein 16 (ZNF16) (Homo sapiens (Human)).